Reading from the N-terminus, the 202-residue chain is Ribonuclease HII (202 aa).

An RNase H type-2 domain is found at 18-202 (GQYAGVDEVG…KSFRPVREAM (185 aa)). Positions 24, 25, and 116 each coordinate a divalent metal cation.

It belongs to the RNase HII family. It depends on Mn(2+) as a cofactor. Mg(2+) serves as cofactor.

Its subcellular location is the cytoplasm. It catalyses the reaction Endonucleolytic cleavage to 5'-phosphomonoester.. Endonuclease that specifically degrades the RNA of RNA-DNA hybrids. In Shewanella piezotolerans (strain WP3 / JCM 13877), this protein is Ribonuclease HII.